The following is a 395-amino-acid chain: MSSIHDLDFIKEKLEELKKAGVYRKLTVLESPSGPRSIIDGKEVINLSSNNYLGLANHPRLKKAAIEAIEKWGVGAGAVRTIIGNMTIHEELERKLAEFKREEAVLTFQSGFTANMGVIQAVVDKGDVIISDELNHASIIDGCRLSRADVVIYKHSDMEDLERVLKEVKDKYRVKMIITDGVFSMDGDIAKLPEIVKLAEKYSAITYVDDAHASGVLGESGRGSADHFNLHGRIDIQIGTLSKAIGVVGGYVAGKRELIEWLNHRGRPFLFSTALPPAAVAASIEAINILSESDALTRKLWDNAKYFKEKLKSLGFDTGKSETPITPVIIGEETKALEFSRKLFEEGVFAQGIVYPTVPKNKARVRTIVTAAHTKEDLDAALKAFEKVGKQLNII.

Arg-24 contacts substrate. 111 to 112 is a pyridoxal 5'-phosphate binding site; that stretch reads GF. Substrate is bound at residue His-136. Pyridoxal 5'-phosphate contacts are provided by residues Ser-184, 209–212, and 240–243; these read DDAH and TLSK. Lys-243 carries the N6-(pyridoxal phosphate)lysine modification. Thr-357 contacts substrate.

Belongs to the class-II pyridoxal-phosphate-dependent aminotransferase family. BioF subfamily. Homodimer. Pyridoxal 5'-phosphate serves as cofactor.

It catalyses the reaction 6-carboxyhexanoyl-[ACP] + L-alanine + H(+) = (8S)-8-amino-7-oxononanoate + holo-[ACP] + CO2. It participates in cofactor biosynthesis; biotin biosynthesis. Catalyzes the decarboxylative condensation of pimeloyl-[acyl-carrier protein] and L-alanine to produce 8-amino-7-oxononanoate (AON), [acyl-carrier protein], and carbon dioxide. The chain is 8-amino-7-oxononanoate synthase from Thermoanaerobacter pseudethanolicus (strain ATCC 33223 / 39E) (Clostridium thermohydrosulfuricum).